Reading from the N-terminus, the 169-residue chain is Putative phosphoesterase SE_0715 (169 aa).

The active-site Proton donor is His34. 2 short sequence motifs (HXTX) span residues 34–37 (HITI) and 115–118 (HFTI). His115 acts as the Proton acceptor in catalysis.

The protein belongs to the 2H phosphoesterase superfamily. YjcG family.

This is Putative phosphoesterase SE_0715 from Staphylococcus epidermidis (strain ATCC 12228 / FDA PCI 1200).